The following is a 242-amino-acid chain: Caffeoyl-CoA O-methyltransferase 2 (242 aa).

Position 16 (Lys16) interacts with substrate. Residues Thr58, Glu80, 82–83 (GV), Ser88, Asp106, and Ala135 contribute to the S-adenosyl-L-methionine site. Substrate is bound at residue Asp158. An a divalent metal cation-binding site is contributed by Asp158. Asp160 is an S-adenosyl-L-methionine binding site. A divalent metal cation contacts are provided by Asp184 and Asn185. Substrate is bound at residue Asn189.

This sequence belongs to the class I-like SAM-binding methyltransferase superfamily. Cation-dependent O-methyltransferase family. CCoAMT subfamily. It depends on a divalent metal cation as a cofactor. As to expression, mostly expressed in petal limbs and tubes, and, at low levels, in stems, roots and leaves.

The protein resides in the cytoplasm. It localises to the cytosol. It catalyses the reaction (E)-caffeoyl-CoA + S-adenosyl-L-methionine = (E)-feruloyl-CoA + S-adenosyl-L-homocysteine + H(+). The enzyme catalyses (E)-5-hydroxyferuloyl-CoA + S-adenosyl-L-methionine = (E)-sinapoyl-CoA + S-adenosyl-L-homocysteine + H(+). It functions in the pathway aromatic compound metabolism; phenylpropanoid biosynthesis. Its function is as follows. Involved in the production of floral volatile phenylpropanoids in flowers of fragrant cultivars (e.g. cv. Mitchell and cv. V26) from cinnamic acid, a common precursor with the anthocyanin biosynthesis pathway involved in flower pigmentation. Methylates caffeoyl-CoA to feruloyl-CoA, also able to methylate 5-hydroxyferuloyl-CoA. The polypeptide is Caffeoyl-CoA O-methyltransferase 2 (Petunia hybrida (Petunia)).